The chain runs to 204 residues: Large ribosomal subunit protein bL25 (204 aa).

It belongs to the bacterial ribosomal protein bL25 family. CTC subfamily. In terms of assembly, part of the 50S ribosomal subunit; part of the 5S rRNA/L5/L18/L25 subcomplex. Contacts the 5S rRNA. Binds to the 5S rRNA independently of L5 and L18.

Functionally, this is one of the proteins that binds to the 5S RNA in the ribosome where it forms part of the central protuberance. The protein is Large ribosomal subunit protein bL25 of Bordetella bronchiseptica (strain ATCC BAA-588 / NCTC 13252 / RB50) (Alcaligenes bronchisepticus).